A 484-amino-acid chain; its full sequence is HTH-type transcriptional regulator TauR (484 aa).

The 69-residue stretch at 16-84 (GSLQHRLRQM…GRSGTFVSAA (69 aa)) folds into the HTH gntR-type domain. The segment at residues 44 to 63 (TRALAAHLGVARITVTLAYA) is a DNA-binding region (H-T-H motif). Lys-330 is modified (N6-(pyridoxal phosphate)lysine).

This sequence in the C-terminal section; belongs to the class-I pyridoxal-phosphate-dependent aminotransferase family. Pyridoxal 5'-phosphate is required as a cofactor.

In terms of biological role, transcriptional activator, which is essential for taurine-dependent expression of the tpa-tauR-xsc operon. Acts by binding to direct repeats in the promoter region. The sequence is that of HTH-type transcriptional regulator TauR from Rhodobacter capsulatus (strain ATCC BAA-309 / NBRC 16581 / SB1003).